The chain runs to 378 residues: MLPSFPPAILALADGTVFRGYSIGAAGHTIGEVVFNTAITGYQEILTDPSYSRQIVTLTYPHIGNVGVNREDVEATKVHAAGLIIKDLPILASNFRQEHSLSHYLKGEKVVAIAGIDTRKLTRILREKGAQNGCVLAGEDNPQKAIDLARSFPGLSGMDLAKVVSVTQPYEWNQTEWALGRGYGVQDKPQFHVVAYDFGVKYNILRMLAERGCRVTVVPAQTSAADALAYNPDGVFLSNGPGDPQPCDYAIAATKDFIERRIPTFGICLGHQIMGLAVGGKTLKMKTGHHGANHPVKDLQDGRVIITSQNHGFAVDPESLPANARVTHVSLFDGTLQGFELTDRPAFCFQGHPEASPGPHDIGYLFDRFTAAMAERKQ.

Residues 1 to 188 (MLPSFPPAIL…LGRGYGVQDK (188 aa)) form a CPSase region. L-glutamine-binding residues include Ser-50, Gly-240, and Gly-242. One can recognise a Glutamine amidotransferase type-1 domain in the interval 192 to 378 (HVVAYDFGVK…FTAAMAERKQ (187 aa)). Cys-268 functions as the Nucleophile in the catalytic mechanism. The L-glutamine site is built by Leu-269, Gln-272, Asn-310, Gly-312, and Phe-313. Residues His-352 and Glu-354 contribute to the active site.

It belongs to the CarA family. In terms of assembly, composed of two chains; the small (or glutamine) chain promotes the hydrolysis of glutamine to ammonia, which is used by the large (or ammonia) chain to synthesize carbamoyl phosphate. Tetramer of heterodimers (alpha,beta)4.

The enzyme catalyses hydrogencarbonate + L-glutamine + 2 ATP + H2O = carbamoyl phosphate + L-glutamate + 2 ADP + phosphate + 2 H(+). It catalyses the reaction L-glutamine + H2O = L-glutamate + NH4(+). Its pathway is amino-acid biosynthesis; L-arginine biosynthesis; carbamoyl phosphate from bicarbonate: step 1/1. It participates in pyrimidine metabolism; UMP biosynthesis via de novo pathway; (S)-dihydroorotate from bicarbonate: step 1/3. Small subunit of the glutamine-dependent carbamoyl phosphate synthetase (CPSase). CPSase catalyzes the formation of carbamoyl phosphate from the ammonia moiety of glutamine, carbonate, and phosphate donated by ATP, constituting the first step of 2 biosynthetic pathways, one leading to arginine and/or urea and the other to pyrimidine nucleotides. The small subunit (glutamine amidotransferase) binds and cleaves glutamine to supply the large subunit with the substrate ammonia. In Ralstonia nicotianae (strain ATCC BAA-1114 / GMI1000) (Ralstonia solanacearum), this protein is Carbamoyl phosphate synthase small chain.